The sequence spans 193 residues: Xanthine phosphoribosyltransferase (193 aa).

Xanthine is bound by residues leucine 20 and asparagine 27. 5-phospho-alpha-D-ribose 1-diphosphate is bound at residue 129–133; it reads ANGKA. Lysine 157 is a xanthine binding site.

This sequence belongs to the purine/pyrimidine phosphoribosyltransferase family. Xpt subfamily. Homodimer.

It localises to the cytoplasm. The enzyme catalyses XMP + diphosphate = xanthine + 5-phospho-alpha-D-ribose 1-diphosphate. It functions in the pathway purine metabolism; XMP biosynthesis via salvage pathway; XMP from xanthine: step 1/1. In terms of biological role, converts the preformed base xanthine, a product of nucleic acid breakdown, to xanthosine 5'-monophosphate (XMP), so it can be reused for RNA or DNA synthesis. The polypeptide is Xanthine phosphoribosyltransferase (Bifidobacterium animalis subsp. lactis (strain AD011)).